Reading from the N-terminus, the 584-residue chain is Protein disulfide-isomerase-like protein of the testis (584 aa).

The N-terminal stretch at M1 to S20 is a signal peptide. N-linked (GlcNAc...) asparagine glycosylation is found at N58, N128, N160, and N340. The 64-residue stretch at L388 to D451 folds into the Thioredoxin domain. A glycan (N-linked (GlcNAc...) asparagine) is linked at N540. Positions K581 to L584 match the Prevents secretion from ER motif.

This sequence belongs to the protein disulfide isomerase family. Homodimer. The homodimer is not disulfide-linked. Interacts with ERO1A and CLGN. In terms of processing, N-glycosylated. As to expression, testis-specific.

It localises to the endoplasmic reticulum. In terms of biological role, probable redox-inactive chaperone involved in spermatogenesis. In Homo sapiens (Human), this protein is Protein disulfide-isomerase-like protein of the testis (PDILT).